The chain runs to 395 residues: Methylthioribose-1-phosphate isomerase (395 aa).

The active-site Proton donor is the Asp258.

This sequence belongs to the eIF-2B alpha/beta/delta subunits family. MtnA subfamily.

Its subcellular location is the cytoplasm. It is found in the nucleus. The catalysed reaction is 5-(methylsulfanyl)-alpha-D-ribose 1-phosphate = 5-(methylsulfanyl)-D-ribulose 1-phosphate. The protein operates within amino-acid biosynthesis; L-methionine biosynthesis via salvage pathway; L-methionine from S-methyl-5-thio-alpha-D-ribose 1-phosphate: step 1/6. In terms of biological role, catalyzes the interconversion of methylthioribose-1-phosphate (MTR-1-P) into methylthioribulose-1-phosphate (MTRu-1-P). In Podospora anserina (strain S / ATCC MYA-4624 / DSM 980 / FGSC 10383) (Pleurage anserina), this protein is Methylthioribose-1-phosphate isomerase.